A 417-amino-acid polypeptide reads, in one-letter code: Gamma-glutamyl phosphate reductase (417 aa).

The protein belongs to the gamma-glutamyl phosphate reductase family.

It localises to the cytoplasm. It carries out the reaction L-glutamate 5-semialdehyde + phosphate + NADP(+) = L-glutamyl 5-phosphate + NADPH + H(+). The protein operates within amino-acid biosynthesis; L-proline biosynthesis; L-glutamate 5-semialdehyde from L-glutamate: step 2/2. In terms of biological role, catalyzes the NADPH-dependent reduction of L-glutamate 5-phosphate into L-glutamate 5-semialdehyde and phosphate. The product spontaneously undergoes cyclization to form 1-pyrroline-5-carboxylate. The protein is Gamma-glutamyl phosphate reductase of Serratia marcescens.